Here is a 290-residue protein sequence, read N- to C-terminus: Formamidopyrimidine-DNA glycosylase (290 aa).

Pro-2 (schiff-base intermediate with DNA) is an active-site residue. Glu-3 acts as the Proton donor in catalysis. Lys-58 acts as the Proton donor; for beta-elimination activity in catalysis. His-98, Arg-126, and Arg-171 together coordinate DNA. The FPG-type zinc finger occupies 256–290 (FVYDRAGLPCRVCATPVRQIVQGQRSTFYCPKCQH). The active-site Proton donor; for delta-elimination activity is the Arg-280.

This sequence belongs to the FPG family. As to quaternary structure, monomer. It depends on Zn(2+) as a cofactor.

The catalysed reaction is Hydrolysis of DNA containing ring-opened 7-methylguanine residues, releasing 2,6-diamino-4-hydroxy-5-(N-methyl)formamidopyrimidine.. It catalyses the reaction 2'-deoxyribonucleotide-(2'-deoxyribose 5'-phosphate)-2'-deoxyribonucleotide-DNA = a 3'-end 2'-deoxyribonucleotide-(2,3-dehydro-2,3-deoxyribose 5'-phosphate)-DNA + a 5'-end 5'-phospho-2'-deoxyribonucleoside-DNA + H(+). Involved in base excision repair of DNA damaged by oxidation or by mutagenic agents. Acts as a DNA glycosylase that recognizes and removes damaged bases. Has a preference for oxidized purines, such as 7,8-dihydro-8-oxoguanine (8-oxoG). Has AP (apurinic/apyrimidinic) lyase activity and introduces nicks in the DNA strand. Cleaves the DNA backbone by beta-delta elimination to generate a single-strand break at the site of the removed base with both 3'- and 5'-phosphates. This chain is Formamidopyrimidine-DNA glycosylase, found in Cupriavidus taiwanensis (strain DSM 17343 / BCRC 17206 / CCUG 44338 / CIP 107171 / LMG 19424 / R1) (Ralstonia taiwanensis (strain LMG 19424)).